The chain runs to 446 residues: Protein odr-4 homolog (446 aa).

A helical transmembrane segment spans residues 76 to 96 (ASQVGRMLPGGLMVLGVFLMT). The span at 394–415 (HPEKRESEPASQHLESKPENKA) shows a compositional bias: basic and acidic residues. Residues 394 to 417 (HPEKRESEPASQHLESKPENKARS) form a disordered region. Residues 426-446 (GLVISTIVASIAIIISFYYIM) traverse the membrane as a helical segment.

This sequence belongs to the ODR-4 family.

The protein resides in the membrane. Functionally, may play a role in the trafficking of a subset of G-protein coupled receptors. In Xenopus laevis (African clawed frog), this protein is Protein odr-4 homolog (odr4).